A 132-amino-acid chain; its full sequence is Large ribosomal subunit protein uL22c (132 aa).

The protein belongs to the universal ribosomal protein uL22 family. In terms of assembly, part of the 50S ribosomal subunit.

Its subcellular location is the plastid. It is found in the chloroplast. This protein binds specifically to 23S rRNA. In terms of biological role, the globular domain of the protein is located near the polypeptide exit tunnel on the outside of the subunit, while an extended beta-hairpin is found that lines the wall of the exit tunnel in the center of the 70S ribosome. The protein is Large ribosomal subunit protein uL22c (rpl22) of Populus trichocarpa (Western balsam poplar).